The chain runs to 408 residues: MSAPKKVVLAYSGGLDTSIILKWLQTEYGCEVVTFTADLGQGEELEPAREKAVMLGIKPDNIFIEDVREEFVRDFVFPMFRANALYEGLYLLGTSIARPLIAKRLVEIAAMTGADAVAHGATGKGNDQVRFELTAYALDPAIKVIAPWREWDLTSRTRLIEFAEQNQIPIAKNKRGEAPFSVDANLLHTSSEGRVLENPGEEAPDYVYQRTVDPEKAPDTPEFVEITFEKGDAVAINGEAMSPATILTRLNELGGKHGVGRLDLVENRFVGMKSRGIYETPGGTILLEAHRGIEQITLDSGAGHLKDSIMPRYAELIYNGFWYSPEREMLQALIDKSQEHVSGTVRVKLYKGFARTVARWSDHSLYSEKHVTFEEDAGAYDQKDAAGFIRLNALRLKLIATRNARVKG.

ATP is bound by residues 10–18 (AYSGGLDTS) and alanine 37. Tyrosine 90 and serine 95 together coordinate L-citrulline. Residue glycine 120 participates in ATP binding. Positions 122, 126, and 127 each coordinate L-aspartate. Asparagine 126 contacts L-citrulline. L-citrulline contacts are provided by arginine 130, serine 181, serine 190, glutamate 266, and tyrosine 278.

The protein belongs to the argininosuccinate synthase family. Type 1 subfamily. Homotetramer.

It is found in the cytoplasm. The enzyme catalyses L-citrulline + L-aspartate + ATP = 2-(N(omega)-L-arginino)succinate + AMP + diphosphate + H(+). The protein operates within amino-acid biosynthesis; L-arginine biosynthesis; L-arginine from L-ornithine and carbamoyl phosphate: step 2/3. This chain is Argininosuccinate synthase, found in Cereibacter sphaeroides (strain ATCC 17025 / ATH 2.4.3) (Rhodobacter sphaeroides).